Here is an 89-residue protein sequence, read N- to C-terminus: Small ribosomal subunit protein bS20 (89 aa).

The segment at 1-21 (MANSAQAKKRARQNVKARKHN) is disordered. Positions 7-21 (AKKRARQNVKARKHN) are enriched in basic residues.

Belongs to the bacterial ribosomal protein bS20 family.

Functionally, binds directly to 16S ribosomal RNA. This Acinetobacter baylyi (strain ATCC 33305 / BD413 / ADP1) protein is Small ribosomal subunit protein bS20.